Consider the following 801-residue polypeptide: Phenylalanine--tRNA ligase beta subunit (801 aa).

One can recognise a tRNA-binding domain in the interval 39–148 (AGSFTGVKVG…EDAVIGTDFR (110 aa)). In terms of domain architecture, B5 spans 401 to 476 (PKPNKVALRR…RIYGYDNIPN (76 aa)). The Mg(2+) site is built by aspartate 454, aspartate 460, glutamate 463, and glutamate 464. The region spanning 707–800 (SKFPSNRRDI…VSEKFGAALR (94 aa)) is the FDX-ACB domain.

This sequence belongs to the phenylalanyl-tRNA synthetase beta subunit family. Type 1 subfamily. In terms of assembly, tetramer of two alpha and two beta subunits. Requires Mg(2+) as cofactor.

The protein resides in the cytoplasm. The catalysed reaction is tRNA(Phe) + L-phenylalanine + ATP = L-phenylalanyl-tRNA(Phe) + AMP + diphosphate + H(+). The chain is Phenylalanine--tRNA ligase beta subunit from Vibrio parahaemolyticus serotype O3:K6 (strain RIMD 2210633).